Here is a 400-residue protein sequence, read N- to C-terminus: Exodeoxyribonuclease 7 large subunit (400 aa).

Belongs to the XseA family. Heterooligomer composed of large and small subunits.

Its subcellular location is the cytoplasm. It carries out the reaction Exonucleolytic cleavage in either 5'- to 3'- or 3'- to 5'-direction to yield nucleoside 5'-phosphates.. Functionally, bidirectionally degrades single-stranded DNA into large acid-insoluble oligonucleotides, which are then degraded further into small acid-soluble oligonucleotides. The sequence is that of Exodeoxyribonuclease 7 large subunit from Clostridium kluyveri (strain NBRC 12016).